A 168-amino-acid chain; its full sequence is Photosystem I assembly protein Ycf3 (168 aa).

TPR repeat units follow at residues 35 to 68 (AFTY…EIDP), 72 to 105 (SYIL…NPFL), and 120 to 153 (GEQA…TPGN).

The protein belongs to the Ycf3 family.

The protein localises to the plastid. The protein resides in the chloroplast thylakoid membrane. In terms of biological role, essential for the assembly of the photosystem I (PSI) complex. May act as a chaperone-like factor to guide the assembly of the PSI subunits. The sequence is that of Photosystem I assembly protein Ycf3 from Amborella trichopoda.